We begin with the raw amino-acid sequence, 172 residues long: Male-specific submandibular salivary gland protein (172 aa).

A signal peptide spans 1–15 (MVKFLLLALALGVSC). N41 is a glycosylation site (N-linked (GlcNAc...) asparagine). 2 disulfides stabilise this stretch: C60–C64 and C79–C170.

The protein belongs to the calycin superfamily. Lipocalin family. Post-translationally, N-glycosylated. As to expression, expressed in acinar cells of the submandibular salivary gland from where it is secreted into saliva (at protein level). Also released from the submandibular salivary gland into blood and excreted in urine (at protein level). Expressed in the lacrimal gland from where it is secreted into tears (at protein level).

The protein resides in the secreted. It is found in the cytoplasm. This Mesocricetus auratus (Golden hamster) protein is Male-specific submandibular salivary gland protein.